An 889-amino-acid chain; its full sequence is Cytoplasmic aconitate hydratase (889 aa).

Residues Q86 and 205-207 contribute to the substrate site; that span reads DSH. [4Fe-4S] cluster contacts are provided by C437, C503, and C506. Residues R536, R541, R699, and 779-780 each bind substrate; that span reads SR.

This sequence belongs to the aconitase/IPM isomerase family. As to quaternary structure, interacts (when associated with the 4Fe-4S) with FBXL5. Interacts with frataxin(81-210). [4Fe-4S] cluster serves as cofactor.

The protein localises to the cytoplasm. Its subcellular location is the cytosol. It catalyses the reaction citrate = D-threo-isocitrate. Its function is as follows. Bifunctional iron sensor that switches between 2 activities depending on iron availability. Iron deprivation, promotes its mRNA binding activity through which it regulates the expression of genes involved in iron uptake, sequestration and utilization. Binds to iron-responsive elements (IRES) in the untranslated region of target mRNAs preventing for instance the translation of ferritin and aminolevulinic acid synthase and stabilizing the transferrin receptor mRNA. Functionally, conversely, when cellular iron levels are high, binds a 4Fe-4S cluster which precludes RNA binding activity and promotes the aconitase activity, the isomerization of citrate to isocitrate via cis-aconitate. The sequence is that of Cytoplasmic aconitate hydratase (ACO1) from Oryctolagus cuniculus (Rabbit).